The following is a 688-amino-acid chain: Sodium channel and clathrin linker 1 (688 aa).

A2 bears the N-acetylalanine mark. Coiled-coil stretches lie at residues 59–108 (LIAE…AVEK) and 152–673 (QTAS…SVIT). S681 is subject to Phosphoserine.

In terms of assembly, interacts with SCN10A and clathrin. Identified in a complex containing SCN10A, clathrin and SCLT1.

It is found in the cytoplasm. The protein resides in the cytoskeleton. The protein localises to the microtubule organizing center. It localises to the centrosome. Its subcellular location is the centriole. Adapter protein that links SCN10A to clathrin. Regulates SCN10A channel activity, possibly by promoting channel internalization. The chain is Sodium channel and clathrin linker 1 (Sclt1) from Mus musculus (Mouse).